The following is a 245-amino-acid chain: Exosome complex component RRP41 (245 aa).

N-acetylalanine is present on Ala2.

The protein belongs to the RNase PH family. As to quaternary structure, component of the RNA exosome core complex (Exo-9), composed of EXOSC1, EXOSC2, EXOSC3, EXOSC4, EXOSC5, EXOSC6, EXOSC7, EXOSC8 and EXOSC9; within the complex interacts with EXOSC2, EXOSC7 and EXOSC9. The catalytically inactive RNA exosome core complex (Exo-9) associates with the catalytic subunit EXOSC10/RRP6. Exo-9 may associate with DIS3 to form the nucleolar exosome complex, or DIS3L to form the cytoplasmic exosome complex. Exo-9 is formed by a hexameric base ring consisting of the heterodimers EXOSC4-EXOSC9, EXOSC5-EXOSC8 and EXOSC6-EXOSC7, and a cap ring consisting of EXOSC1, EXOSC2 and EXOSC3. The RNA exosome complex associates with cofactors C1D/RRP47, MPHOSPH6/MPP6 and MTREX/MTR4. Interacts with DDX60. Interacts with DIS3; the interaction is direct.

The protein resides in the cytoplasm. It is found in the nucleus. The protein localises to the nucleolus. It localises to the nucleoplasm. In terms of biological role, non-catalytic component of the RNA exosome complex which has 3'-&gt;5' exoribonuclease activity and participates in a multitude of cellular RNA processing and degradation events. In the nucleus, the RNA exosome complex is involved in proper maturation of stable RNA species such as rRNA, snRNA and snoRNA, in the elimination of RNA processing by-products and non-coding 'pervasive' transcripts, such as antisense RNA species and promoter-upstream transcripts (PROMPTs), and of mRNAs with processing defects, thereby limiting or excluding their export to the cytoplasm. The RNA exosome may be involved in Ig class switch recombination (CSR) and/or Ig variable region somatic hypermutation (SHM) by targeting AICDA deamination activity to transcribed dsDNA substrates. In the cytoplasm, the RNA exosome complex is involved in general mRNA turnover and specifically degrades inherently unstable mRNAs containing AU-rich elements (AREs) within their 3' untranslated regions, and in RNA surveillance pathways, preventing translation of aberrant mRNAs. It seems to be involved in degradation of histone mRNA. The catalytic inactive RNA exosome core complex of 9 subunits (Exo-9) is proposed to play a pivotal role in the binding and presentation of RNA for ribonucleolysis, and to serve as a scaffold for the association with catalytic subunits and accessory proteins or complexes. EXOSC4 binds to ARE-containing RNAs. In Homo sapiens (Human), this protein is Exosome complex component RRP41 (EXOSC4).